The primary structure comprises 95 residues: Parvalbumin beta 3 (95 aa).

A1 is subject to N-acetylalanine. EF-hand domains are found at residues 39-66 (FFAIIDQDHSGFIEEDELKLFLQTFSAG) and 77-95 (DVDGDGMIGVDEFVALVKA). D44, D46, S48, F50, E52, E55, D77, D79, D81, M83, and E88 together coordinate Ca(2+).

This sequence belongs to the parvalbumin family.

In terms of biological role, in muscle, parvalbumin is thought to be involved in relaxation after contraction. It binds two calcium ions. This is Parvalbumin beta 3 from Merluccius paradoxus (Deep-water Cape hake).